Here is a 379-residue protein sequence, read N- to C-terminus: Histone-lysine N-methyltransferase ATXR5 (379 aa).

Residues 1–15 (MATWNASSPAASPCS) show a composition bias toward low complexity. Residues 1–42 (MATWNASSPAASPCSSRRRTKAPARRPSSESPPPRKMKSMAE) form a disordered region. A chloroplast-targeting transit peptide spans 1-44 (MATWNASSPAASPCSSRRRTKAPARRPSSESPPPRKMKSMAEIM). A PHD-type zinc finger spans residues 64 to 114 (NVTCEKCGSGEGDDELLLCDKCDRGFHMKCLRPIVVRVPIGTWLCVDCSDQ). The PIP motif signature appears at 122–129 (QKKILHFF). Met221 contributes to the substrate binding site. An SET domain is found at 245–367 (PPLVVVFDPL…KGERLYYDYN (123 aa)). S-adenosyl-L-methionine is bound by residues 255–257 (EGY) and 317–321 (RFING). Arg339 is a substrate binding site. Residue Tyr366 participates in S-adenosyl-L-methionine binding. Residue 369–370 (YE) participates in substrate binding. Tyr373 serves as a coordination point for S-adenosyl-L-methionine.

The protein belongs to the class V-like SAM-binding methyltransferase superfamily. Histone-lysine methyltransferase family. TRX/MLL subfamily. Isoform 1 but not isoform 2 interacts with PCNA1 and PCNA2. Interacts (via PHD domain) with HTR1 (via N-terminus). Isoform 2 interacts with IPS1. As to expression, expressed in leaves, roots, stems, flowers, siliques and developing pollen. Up-regulated in tissues where cell division is active.

It is found in the nucleus. It localises to the plastid. Its subcellular location is the chloroplast. The catalysed reaction is L-lysyl(27)-[histone H3] + S-adenosyl-L-methionine = N(6)-methyl-L-lysyl(27)-[histone H3] + S-adenosyl-L-homocysteine + H(+). In terms of biological role, histone methyltransferase that specifically monomethylates 'Lys-27' of histone H3 (H3K27me1). Has much higher activity on nucleosomes containing H3.1 than H3.3. Involved in the formation of constitutive heterochromatin and the silencing of heterochromatic elements. Influences which sets of rRNA gene variants are expressed or silenced. This chain is Histone-lysine N-methyltransferase ATXR5 (ATXR5), found in Arabidopsis thaliana (Mouse-ear cress).